A 147-amino-acid chain; its full sequence is Cyanate hydratase (147 aa).

Catalysis depends on residues R88, E91, and S114.

This sequence belongs to the cyanase family.

The catalysed reaction is cyanate + hydrogencarbonate + 3 H(+) = NH4(+) + 2 CO2. Catalyzes the reaction of cyanate with bicarbonate to produce ammonia and carbon dioxide. The polypeptide is Cyanate hydratase (Prochlorococcus marinus subsp. pastoris (strain CCMP1986 / NIES-2087 / MED4)).